We begin with the raw amino-acid sequence, 467 residues long: Asparagine--tRNA ligase (467 aa).

Belongs to the class-II aminoacyl-tRNA synthetase family. Homodimer.

The protein localises to the cytoplasm. It catalyses the reaction tRNA(Asn) + L-asparagine + ATP = L-asparaginyl-tRNA(Asn) + AMP + diphosphate + H(+). The polypeptide is Asparagine--tRNA ligase (Bacteroides fragilis (strain ATCC 25285 / DSM 2151 / CCUG 4856 / JCM 11019 / LMG 10263 / NCTC 9343 / Onslow / VPI 2553 / EN-2)).